Consider the following 68-residue polypeptide: DNA-directed RNA polymerase subunit Rpo10 (68 aa).

Residues Cys-7, Cys-10, Cys-44, and Cys-45 each coordinate Zn(2+).

It belongs to the archaeal Rpo10/eukaryotic RPB10 RNA polymerase subunit family. As to quaternary structure, part of the RNA polymerase complex. Zn(2+) is required as a cofactor.

Its subcellular location is the cytoplasm. The catalysed reaction is RNA(n) + a ribonucleoside 5'-triphosphate = RNA(n+1) + diphosphate. DNA-dependent RNA polymerase (RNAP) catalyzes the transcription of DNA into RNA using the four ribonucleoside triphosphates as substrates. This Methanococcus maripaludis (strain DSM 14266 / JCM 13030 / NBRC 101832 / S2 / LL) protein is DNA-directed RNA polymerase subunit Rpo10.